The primary structure comprises 504 residues: Amphoterin-induced protein 3 (504 aa).

An N-terminal signal peptide occupies residues M1–G19. Over T20–T383 the chain is Extracellular. Residues G25–A61 enclose the LRRNT domain. 2 cysteine pairs are disulfide-bonded: C34–C40 and C38–C47. LRR repeat units lie at residues A62–P83, Q86–N107, G110–G133, A134–G155, A158–H178, and H184–P207. An N-linked (GlcNAc...) asparagine glycan is attached at N107. Positions N219–S275 constitute an LRRCT domain. Intrachain disulfides connect C223/C251, C225/C273, and C300/C352. 4 N-linked (GlcNAc...) asparagine glycosylation sites follow: N272, N301, N362, and N368. The Ig-like C2-type domain occupies P277 to S370. The chain crosses the membrane as a helical span at residues G384–A404. Topologically, residues P405–T504 are cytoplasmic. Positions T422–A448 are disordered. Over residues S424–P440 the composition is skewed to polar residues.

It belongs to the immunoglobulin superfamily. AMIGO family. In terms of assembly, binds AMIGO1 or AMIGO2.

The protein resides in the membrane. May mediate heterophilic cell-cell interaction. May contribute to signal transduction through its intracellular domain. The polypeptide is Amphoterin-induced protein 3 (Homo sapiens (Human)).